Here is a 424-residue protein sequence, read N- to C-terminus: 5-methylthioadenosine/S-adenosylhomocysteine deaminase (424 aa).

Zn(2+)-binding residues include His60 and His62. Substrate contacts are provided by Glu89 and His181. His208 serves as a coordination point for Zn(2+). The substrate site is built by Glu211 and Asp296. A Zn(2+)-binding site is contributed by Asp296.

It belongs to the metallo-dependent hydrolases superfamily. MTA/SAH deaminase family. It depends on Zn(2+) as a cofactor.

The catalysed reaction is S-adenosyl-L-homocysteine + H2O + H(+) = S-inosyl-L-homocysteine + NH4(+). It catalyses the reaction S-methyl-5'-thioadenosine + H2O + H(+) = S-methyl-5'-thioinosine + NH4(+). Catalyzes the deamination of 5-methylthioadenosine and S-adenosyl-L-homocysteine into 5-methylthioinosine and S-inosyl-L-homocysteine, respectively. Is also able to deaminate adenosine. The protein is 5-methylthioadenosine/S-adenosylhomocysteine deaminase of Thermococcus kodakarensis (strain ATCC BAA-918 / JCM 12380 / KOD1) (Pyrococcus kodakaraensis (strain KOD1)).